The sequence spans 180 residues: Large ribosomal subunit protein uL5 (180 aa).

The protein belongs to the universal ribosomal protein uL5 family. As to quaternary structure, part of the 50S ribosomal subunit; part of the 5S rRNA/L5/L18/L25 subcomplex. Contacts the 5S rRNA and the P site tRNA. Forms a bridge to the 30S subunit in the 70S ribosome.

Its function is as follows. This is one of the proteins that bind and probably mediate the attachment of the 5S RNA into the large ribosomal subunit, where it forms part of the central protuberance. In the 70S ribosome it contacts protein S13 of the 30S subunit (bridge B1b), connecting the 2 subunits; this bridge is implicated in subunit movement. Contacts the P site tRNA; the 5S rRNA and some of its associated proteins might help stabilize positioning of ribosome-bound tRNAs. The polypeptide is Large ribosomal subunit protein uL5 (Roseiflexus sp. (strain RS-1)).